Consider the following 524-residue polypeptide: Serine/threonine-protein phosphatase 2A 56 kDa regulatory subunit gamma isoform (524 aa).

An N-acetylmethionine modification is found at Met-1. Residues 472–489 carry the Nuclear localization signal motif; sequence RKTVSDEARQAQKDPKKE. The segment at 476–524 is disordered; the sequence is SDEARQAQKDPKKERPLARRKSELPQDPHTKKALEAHCRADELVPQDGR.

The protein belongs to the phosphatase 2A regulatory subunit B56 family. As to quaternary structure, PP2A consists of a common heterodimeric core enzyme, composed of PPP2CA a 36 kDa catalytic subunit (subunit C) and PPP2R1A a 65 kDa constant regulatory subunit (PR65 or subunit A), that associates with a variety of regulatory subunits. Proteins that associate with the core dimer include three families of regulatory subunits B (the R2/B/PR55/B55, R3/B''/PR72/PR130/PR59 and R5/B'/B56 families), the 48 kDa variable regulatory subunit, viral proteins, and cell signaling molecules. Interacts with SGO1. Interacts with SGO1; the interaction is direct. May interact with TP53. Interacts with IER3 and/or ERK kinases; regulates ERK dephosphorylation Interacts with CIP2A; this interaction stabilizes CIP2A. In terms of tissue distribution, highly expressed in testis, heart and spleen. Also found in brain and skeletal muscle.

Its subcellular location is the nucleus. The protein localises to the chromosome. The protein resides in the centromere. Functionally, the B regulatory subunit might modulate substrate selectivity and catalytic activity, and might also direct the localization of the catalytic enzyme to a particular subcellular compartment. The PP2A-PPP2R5C holoenzyme may activate TP53 and play a role in DNA damage-induced inhibition of cell proliferation. PP2A-PPP2R5C may also regulate the ERK signaling pathway through ERK dephosphorylation. The protein is Serine/threonine-protein phosphatase 2A 56 kDa regulatory subunit gamma isoform (PPP2R5C) of Oryctolagus cuniculus (Rabbit).